A 338-amino-acid chain; its full sequence is uncharacterized protein (338 aa).

This is an uncharacterized protein from Thermoproteus tenax (TTV1).